A 215-amino-acid polypeptide reads, in one-letter code: Pyrrolidone-carboxylate peptidase (215 aa).

Active-site residues include E80, C143, and H167.

Belongs to the peptidase C15 family. In terms of assembly, homotetramer.

It localises to the cytoplasm. The enzyme catalyses Release of an N-terminal pyroglutamyl group from a polypeptide, the second amino acid generally not being Pro.. In terms of biological role, removes 5-oxoproline from various penultimate amino acid residues except L-proline. This is Pyrrolidone-carboxylate peptidase from Bacillus cereus (strain AH820).